A 277-amino-acid polypeptide reads, in one-letter code: Thymidylate synthase (277 aa).

Position 21 (Arg21) interacts with dUMP. His51 contributes to the (6R)-5,10-methylene-5,6,7,8-tetrahydrofolate binding site. 126-127 contacts dUMP; that stretch reads RR. The active-site Nucleophile is Cys159. DUMP-binding positions include 179–182, Asn190, and 220–222; these read RSAD and HLY. A (6R)-5,10-methylene-5,6,7,8-tetrahydrofolate-binding site is contributed by Asp182. Residue Ser276 participates in (6R)-5,10-methylene-5,6,7,8-tetrahydrofolate binding.

Belongs to the thymidylate synthase family. Bacterial-type ThyA subfamily. Homodimer.

The protein resides in the cytoplasm. It catalyses the reaction dUMP + (6R)-5,10-methylene-5,6,7,8-tetrahydrofolate = 7,8-dihydrofolate + dTMP. It participates in pyrimidine metabolism; dTTP biosynthesis. In terms of biological role, catalyzes the reductive methylation of 2'-deoxyuridine-5'-monophosphate (dUMP) to 2'-deoxythymidine-5'-monophosphate (dTMP) while utilizing 5,10-methylenetetrahydrofolate (mTHF) as the methyl donor and reductant in the reaction, yielding dihydrofolate (DHF) as a by-product. This enzymatic reaction provides an intracellular de novo source of dTMP, an essential precursor for DNA biosynthesis. The polypeptide is Thymidylate synthase (Saccharophagus degradans (strain 2-40 / ATCC 43961 / DSM 17024)).